The following is a 100-amino-acid chain: MDMFADNVVTLVDEEGREISFEMLDKVNYNGNDYIVLLPLEEIEKEDEEAEVIILRIEDRDGEEVYVGVEDEEELENVFEIFQSRFDDEDFDMYDEEDEE.

This sequence belongs to the UPF0473 family.

This chain is UPF0473 protein Csac_1599, found in Caldicellulosiruptor saccharolyticus (strain ATCC 43494 / DSM 8903 / Tp8T 6331).